The chain runs to 393 residues: Formate-dependent phosphoribosylglycinamide formyltransferase (393 aa).

N(1)-(5-phospho-beta-D-ribosyl)glycinamide-binding positions include 22-23 (EL) and Glu82. ATP is bound by residues Arg114, Lys155, 160–165 (SSGKGQ), 195–198 (ESFV), and Glu203. The region spanning 119 to 308 (RLAAEELGLR…EFALHVRAVL (190 aa)) is the ATP-grasp domain. 2 residues coordinate Mg(2+): Glu267 and Glu279. N(1)-(5-phospho-beta-D-ribosyl)glycinamide-binding positions include Asp286, Lys356, and 363 to 364 (RR).

The protein belongs to the PurK/PurT family. Homodimer.

It carries out the reaction N(1)-(5-phospho-beta-D-ribosyl)glycinamide + formate + ATP = N(2)-formyl-N(1)-(5-phospho-beta-D-ribosyl)glycinamide + ADP + phosphate + H(+). It participates in purine metabolism; IMP biosynthesis via de novo pathway; N(2)-formyl-N(1)-(5-phospho-D-ribosyl)glycinamide from N(1)-(5-phospho-D-ribosyl)glycinamide (formate route): step 1/1. Involved in the de novo purine biosynthesis. Catalyzes the transfer of formate to 5-phospho-ribosyl-glycinamide (GAR), producing 5-phospho-ribosyl-N-formylglycinamide (FGAR). Formate is provided by PurU via hydrolysis of 10-formyl-tetrahydrofolate. The chain is Formate-dependent phosphoribosylglycinamide formyltransferase from Oleidesulfovibrio alaskensis (strain ATCC BAA-1058 / DSM 17464 / G20) (Desulfovibrio alaskensis).